Reading from the N-terminus, the 460-residue chain is Omega-3 fatty acid desaturase, chloroplastic (460 aa).

A Histidine box-1 motif is present at residues 177 to 181 (HDCGH). A Histidine box-2 motif is present at residues 213–217 (HRTHH). The Histidine box-3 signature appears at 380–384 (HVIHH).

Belongs to the fatty acid desaturase type 1 family.

It localises to the plastid. It is found in the chloroplast membrane. It functions in the pathway lipid metabolism; polyunsaturated fatty acid biosynthesis. In terms of biological role, chloroplast omega-3 fatty acid desaturase introduces the third double bond in the biosynthesis of 16:3 and 18:3 fatty acids, important constituents of plant membranes. It is thought to use ferredoxin as an electron donor and to act on fatty acids esterified to galactolipids, sulfolipids and phosphatidylglycerol. This is Omega-3 fatty acid desaturase, chloroplastic (FAD7A-1) from Ricinus communis (Castor bean).